The sequence spans 388 residues: Alcohol dehydrogenase-like 1 (388 aa).

Zn(2+)-binding residues include Cys-53, Thr-55, His-76, Cys-106, Cys-109, Cys-112, Cys-120, and Cys-185. Thr-55 and His-76 together coordinate an alcohol. Residue Thr-55 participates in NAD(+) binding. NAD(+) is bound by residues 210–215, Asp-234, Lys-239, 304–306, Phe-331, and Arg-381; these read GLGAVG and LGM.

This sequence belongs to the zinc-containing alcohol dehydrogenase family. Class-III subfamily. As to quaternary structure, homodimer. The cofactor is Zn(2+).

Its subcellular location is the cytoplasm. It catalyses the reaction a primary alcohol + NAD(+) = an aldehyde + NADH + H(+). The enzyme catalyses a secondary alcohol + NAD(+) = a ketone + NADH + H(+). The sequence is that of Alcohol dehydrogenase-like 1 from Arabidopsis thaliana (Mouse-ear cress).